We begin with the raw amino-acid sequence, 1087 residues long: Formin-H (1087 aa).

Positions 1–23 are enriched in polar residues; it reads MSFDLESNSSGGSTIGRNSSIRL. Residues 1-25 are disordered; it reads MSFDLESNSSGGSTIGRNSSIRLSS. The GBD/FH3 domain occupies 34–394; it reads VSLNEIIDLD…QLEDELKIHP (361 aa). Low complexity-rich tracts occupy residues 416–436 and 549–558; these read FGFG…SMAK and SPGSTLSPSP. 3 disordered regions span residues 416–445, 549–625, and 1048–1087; these read FGFG…DNEE, SPGS…PAKP, and VDSL…QLKK. Residues 433–461 are a coiled coil; it reads SMAKTELKKDNEEKQKTIEHLLKQLNKFS. Residues 569–588 are compositionally biased toward polar residues; it reads FGITSSSIHTSTDKLTNSTE. Positions 589–615 constitute an FH1 domain; the sequence is PILGSPPPPPPPPMSGGGGPPPPPPPP. Positions 592-616 are enriched in pro residues; sequence GSPPPPPPPPMSGGGGPPPPPPPPG. The FH2 domain occupies 623–1016; the sequence is AKPIIKPSVK…ENSKMEDPEK (394 aa). One can recognise a DAD domain in the interval 1013–1051; that stretch reads DPEKGGLQDLSSQIRSGQLFKDRRVGDSVIAQMQNVDSL.

Belongs to the formin homology family. Diaphanous subfamily. As to quaternary structure, interacts with vasP, proB/profilin-2 and rac1A. Interacts (via GBD/FH3 domain) with activated Rho-GTPases.

The protein localises to the cytoplasm. The protein resides in the cell cortex. Its subcellular location is the cytoskeleton. Its function is as follows. Formins play an important role in the nucleation of actin and the formation of linear actin filaments. Important for cell migration and formation, elongation and maintenance of filopodia. Specifically controls filopodial dynamics by regulating actin turnover at the barbed ends of actin filaments. The chain is Formin-H (forH) from Dictyostelium discoideum (Social amoeba).